Reading from the N-terminus, the 719-residue chain is Probable disease resistance protein At4g14610 (719 aa).

Residues 25 to 73 (SLPENLAALQKAIEVLKTKHDDVKRRVDKEEFLGRRHRLSQVQVEIERL) adopt a coiled-coil conformation. Residues 114–418 (EENLVAQVEE…NELEKILGCP (305 aa)) enclose the NB-ARC domain. 156–163 (GMGGVGKT) serves as a coordination point for ATP. LRR repeat units lie at residues 400-421 (AVRRMSLMKNELEKILGCPTCP), 422-444 (QLTTLLLQKNHKLVNISGEFFRF), and 447-469 (NLVVLDLSWNSSLTGLPKKISEV).

It belongs to the disease resistance NB-LRR family.

Probable disease resistance protein. This is Probable disease resistance protein At4g14610 from Arabidopsis thaliana (Mouse-ear cress).